The sequence spans 212 residues: Glycerol-3-phosphate acyltransferase (212 aa).

A run of 5 helical transmembrane segments spans residues Ala9 to Leu29, Gly67 to Ala87, Trp95 to Gly115, Met128 to Ile148, and Leu168 to Leu190.

This sequence belongs to the PlsY family. As to quaternary structure, probably interacts with PlsX.

Its subcellular location is the cell inner membrane. The catalysed reaction is an acyl phosphate + sn-glycerol 3-phosphate = a 1-acyl-sn-glycero-3-phosphate + phosphate. Its pathway is lipid metabolism; phospholipid metabolism. In terms of biological role, catalyzes the transfer of an acyl group from acyl-phosphate (acyl-PO(4)) to glycerol-3-phosphate (G3P) to form lysophosphatidic acid (LPA). This enzyme utilizes acyl-phosphate as fatty acyl donor, but not acyl-CoA or acyl-ACP. The protein is Glycerol-3-phosphate acyltransferase of Parasynechococcus marenigrum (strain WH8102).